The following is a 261-amino-acid chain: Proline-rich protein HaeIII subfamily 1 (261 aa).

A signal peptide spans M1–S15. A disordered region spans residues S15–R261. Composition is skewed to pro residues over residues Q32 to P44 and G51 to G237. Residues G238–R261 show a composition bias toward low complexity.

The protein resides in the secreted. In Mus musculus (Mouse), this protein is Proline-rich protein HaeIII subfamily 1 (Prh1).